The following is a 149-amino-acid chain: Ribonuclease H (149 aa).

Residues 1–142 (MSTITIHTDG…ADELAREGLA (142 aa)) enclose the RNase H type-1 domain. Residues Asp9, Glu47, Asp70, and Asp134 each coordinate Mg(2+). The tract at residues 124 to 149 (HAGDPGNERADELAREGLAEARGRQP) is disordered. Positions 129–149 (GNERADELAREGLAEARGRQP) are enriched in basic and acidic residues.

The protein belongs to the RNase H family. Monomer. Requires Mg(2+) as cofactor.

Its subcellular location is the cytoplasm. The enzyme catalyses Endonucleolytic cleavage to 5'-phosphomonoester.. Functionally, endonuclease that specifically degrades the RNA of RNA-DNA hybrids. In Maricaulis maris (strain MCS10) (Caulobacter maris), this protein is Ribonuclease H.